A 149-amino-acid polypeptide reads, in one-letter code: Ribonuclease H (149 aa).

Positions 1–143 (MNAVEIYTDG…ADMLANRGVE (143 aa)) constitute an RNase H type-1 domain. Aspartate 9, glutamate 47, aspartate 69, and aspartate 135 together coordinate Mg(2+).

It belongs to the RNase H family. As to quaternary structure, monomer. It depends on Mg(2+) as a cofactor.

Its subcellular location is the cytoplasm. The enzyme catalyses Endonucleolytic cleavage to 5'-phosphomonoester.. Endonuclease that specifically degrades the RNA of RNA-DNA hybrids. In Albidiferax ferrireducens (strain ATCC BAA-621 / DSM 15236 / T118) (Rhodoferax ferrireducens), this protein is Ribonuclease H.